A 467-amino-acid chain; its full sequence is Transcription factor TGAL7 (467 aa).

Residues 1 to 10 (MGGSREEDRQ) show a composition bias toward basic and acidic residues. Disordered regions lie at residues 1 to 42 (MGGS…KESS) and 105 to 184 (QLQV…KTLR). Residues 25 to 41 (SSSPTTMIASSSMSKES) show a composition bias toward low complexity. The segment covering 120–129 (QGGQKINSSV) has biased composition (polar residues). Residues 145 to 157 (KDNKNSSLIKKEG) show a composition bias toward basic and acidic residues. Over residues 158–168 (SSSGKGATTSN) the composition is skewed to polar residues. The span at 169–182 (DPEREGRRTLDPKT) shows a compositional bias: basic and acidic residues. The bZIP domain maps to 179–223 (DPKTLRRLAQNREAARKSRLRKKAYIQQLESSRIRLSQLEQQVHV). The basic motif stretch occupies residues 181–201 (KTLRRLAQNREAARKSRLRKK). Residues 207–221 (LESSRIRLSQLEQQV) form a leucine-zipper region. Residues 247-458 (ASLFDLEYGR…RALSTLWVAR (212 aa)) enclose the DOG1 domain.

The protein belongs to the bZIP family. As to quaternary structure, interacts with NPR5/NH4, NH5.1 and NH5.2.

It is found in the nucleus. In terms of biological role, transcriptional regulator involved in defense response. The sequence is that of Transcription factor TGAL7 from Oryza sativa subsp. japonica (Rice).